Here is a 351-residue protein sequence, read N- to C-terminus: Alanine racemase (351 aa).

Catalysis depends on Lys35, which acts as the Proton acceptor; specific for D-alanine. Lys35 is modified (N6-(pyridoxal phosphate)lysine). Arg127 is a binding site for substrate. Catalysis depends on Tyr247, which acts as the Proton acceptor; specific for L-alanine. Residue Met295 coordinates substrate.

It belongs to the alanine racemase family. The cofactor is pyridoxal 5'-phosphate.

It carries out the reaction L-alanine = D-alanine. Its pathway is amino-acid biosynthesis; D-alanine biosynthesis; D-alanine from L-alanine: step 1/1. In terms of biological role, catalyzes the interconversion of L-alanine and D-alanine. May also act on other amino acids. The sequence is that of Alanine racemase (alr) from Vesicomyosocius okutanii subsp. Calyptogena okutanii (strain HA).